The primary structure comprises 285 residues: Chalcone synthase 6-4 (285 aa).

Cys60 is an active-site residue.

The protein belongs to the thiolase-like superfamily. Chalcone/stilbene synthases family.

It catalyses the reaction (E)-4-coumaroyl-CoA + 3 malonyl-CoA + 3 H(+) = 2',4,4',6'-tetrahydroxychalcone + 3 CO2 + 4 CoA. It participates in secondary metabolite biosynthesis; flavonoid biosynthesis. The primary product of this enzyme is 4,2',4',6'-tetrahydroxychalcone (also termed naringenin-chalcone or chalcone) which can under specific conditions spontaneously isomerize into naringenin. The sequence is that of Chalcone synthase 6-4 (CHS6-4) from Medicago sativa (Alfalfa).